A 146-amino-acid chain; its full sequence is Hemoglobin subunit beta (146 aa).

In terms of domain architecture, Globin spans 2 to 146 (QWTAEEKQLI…VAHALARKYH (145 aa)). Heme b-binding residues include His-63 and His-92.

This sequence belongs to the globin family. In terms of assembly, heterotetramer of two alpha chains and two beta chains. Red blood cells.

In terms of biological role, involved in oxygen transport from the lung to the various peripheral tissues. The chain is Hemoglobin subunit beta (HBB) from Turdus merula (Common blackbird).